The chain runs to 74 residues: Translation initiation factor IF-1 (74 aa).

One can recognise an S1-like domain in the interval 1-72 (MSKEDAIEME…NKGRITYRLK (72 aa)).

The protein belongs to the IF-1 family. As to quaternary structure, component of the 30S ribosomal translation pre-initiation complex which assembles on the 30S ribosome in the order IF-2 and IF-3, IF-1 and N-formylmethionyl-tRNA(fMet); mRNA recruitment can occur at any time during PIC assembly.

Its subcellular location is the cytoplasm. Functionally, one of the essential components for the initiation of protein synthesis. Stabilizes the binding of IF-2 and IF-3 on the 30S subunit to which N-formylmethionyl-tRNA(fMet) subsequently binds. Helps modulate mRNA selection, yielding the 30S pre-initiation complex (PIC). Upon addition of the 50S ribosomal subunit IF-1, IF-2 and IF-3 are released leaving the mature 70S translation initiation complex. The chain is Translation initiation factor IF-1 from Synechococcus sp. (strain JA-2-3B'a(2-13)) (Cyanobacteria bacterium Yellowstone B-Prime).